Reading from the N-terminus, the 444-residue chain is Phosphoglucosamine mutase (444 aa).

Serine 102 acts as the Phosphoserine intermediate in catalysis. Serine 102, aspartate 241, aspartate 243, and aspartate 245 together coordinate Mg(2+). Serine 102 is subject to Phosphoserine.

The protein belongs to the phosphohexose mutase family. Mg(2+) serves as cofactor. Activated by phosphorylation.

It carries out the reaction alpha-D-glucosamine 1-phosphate = D-glucosamine 6-phosphate. Functionally, catalyzes the conversion of glucosamine-6-phosphate to glucosamine-1-phosphate. This is Phosphoglucosamine mutase from Actinobacillus pleuropneumoniae serotype 7 (strain AP76).